The chain runs to 179 residues: MAELATIARPYAEALFRVAEGGDIAAWSTLVQELAQVAHLPEVLSVASSPKVTRKQVAELLLVAVKSPLAAGAEAKNFVQMLVDNHRIALLPEIAEQFEALKNEREGAADAEIVSAFPLEGAELDSLVSGLERKFKRKLKPTVEVDSSLIGGVRVTVGDEVLDTSVRARLASMQAALTA.

This sequence belongs to the ATPase delta chain family. As to quaternary structure, F-type ATPases have 2 components, F(1) - the catalytic core - and F(0) - the membrane proton channel. F(1) has five subunits: alpha(3), beta(3), gamma(1), delta(1), epsilon(1). F(0) has three main subunits: a(1), b(2) and c(10-14). The alpha and beta chains form an alternating ring which encloses part of the gamma chain. F(1) is attached to F(0) by a central stalk formed by the gamma and epsilon chains, while a peripheral stalk is formed by the delta and b chains.

Its subcellular location is the cell inner membrane. Functionally, f(1)F(0) ATP synthase produces ATP from ADP in the presence of a proton or sodium gradient. F-type ATPases consist of two structural domains, F(1) containing the extramembraneous catalytic core and F(0) containing the membrane proton channel, linked together by a central stalk and a peripheral stalk. During catalysis, ATP synthesis in the catalytic domain of F(1) is coupled via a rotary mechanism of the central stalk subunits to proton translocation. This protein is part of the stalk that links CF(0) to CF(1). It either transmits conformational changes from CF(0) to CF(1) or is implicated in proton conduction. This chain is ATP synthase subunit delta, found in Burkholderia vietnamiensis (strain G4 / LMG 22486) (Burkholderia cepacia (strain R1808)).